Here is a 4660-residue protein sequence, read N- to C-terminus: Low-density lipoprotein receptor-related protein 2 (4660 aa).

An N-terminal signal peptide occupies residues 1-25; that stretch reads MERGAAAAAWMLLLAIAACLAPVSG. The Extracellular segment spans residues 26–4425; the sequence is QECGSGNFRC…LSRGIPPGTT (4400 aa). 7 LDL-receptor class A domains span residues 27-63, 66-104, 107-143, 146-180, 182-218, 221-257, and 264-307; these read ECGS…IGCP, SCGS…QNCP, TCSS…RNCY, TCDQ…ANCT, LCSQ…HNCN, TCGG…DGCE, and TCYP…RYCG. Disulfide bonds link C28/C40, C35/C53, C47/C62, C67/C80, C74/C93, C87/C103, C108/C120, C115/C133, C127/C142, C147/C157, C152/C170, C164/C179, C183/C195, C190/C208, C202/C217, C222/C234, C229/C247, C241/C256, C265/C278, C272/C291, and C285/C306. N-linked (GlcNAc...) asparagine glycosylation is found at N159 and N178. N-linked (GlcNAc...) asparagine glycosylation is found at N299, N340, N387, and N462. LDL-receptor class B repeat units lie at residues 435–477, 478–520, 521–567, and 568–612; these read HRVF…DWIN, NKLY…DPTV, GYLF…DLVS, and KRVY…FEEH. N-linked (GlcNAc...) asparagine glycosylation is present at N657. 4 LDL-receptor class B repeats span residues 752 to 794, 795 to 836, 837 to 880, and 881 to 924; these read STIF…DWIS, RNLY…HPAA, GYMF…DWST, and SRLY…FKDN. N865 carries N-linked (GlcNAc...) asparagine glycosylation. Residues 1024-1060 form the LDL-receptor class A 8 domain; it reads QCGSSSFPCNNGKCVPSIFRCDGVDDCHDNSDEHQCG. Cystine bridges form between C1025/C1037, C1032/C1050, and C1044/C1059. N-linked (GlcNAc...) asparagine glycosylation is present at N1063. LDL-receptor class A domains follow at residues 1065–1102, 1109–1145, 1149–1185, 1187–1224, 1230–1268, 1271–1307, and 1312–1350; these read TCSS…QNCP, TCPP…KNCQ, TCHP…AGCV, NCTS…AGCP, MCHP…NGCV, TCSP…KDCP, and HCPS…PLCN. Disulfide bonds link C1066–C1079, C1073–C1092, C1086–C1101, C1110–C1122, C1117–C1135, C1129–C1144, C1150–C1162, C1157–C1175, and C1169–C1184. Ca(2+) contacts are provided by W1127, D1130, D1132, D1134, D1140, and E1141. N-linked (GlcNAc...) asparagine glycosylation is present at N1187. 18 disulfide bridges follow: C1188–C1201, C1195–C1214, C1208–C1223, C1231–C1244, C1238–C1257, C1251–C1267, C1272–C1284, C1279–C1297, C1291–C1306, C1313–C1326, C1320–C1339, C1333–C1349, C1354–C1365, C1361–C1374, C1376–C1389, C1395–C1405, C1401–C1414, and C1416–C1429. 6 residues coordinate Ca(2+): Y1206, D1209, V1211, D1213, D1219, and E1220. Residues N1328 and N1341 are each glycosylated (N-linked (GlcNAc...) asparagine). Positions 1350–1390 constitute an EGF-like 1 domain; the sequence is NQDSCLHFNGGCTHRCIQGPFGATCVCPIGYQLANDTKTCE. Residue N1384 is glycosylated (N-linked (GlcNAc...) asparagine). One can recognise an EGF-like 2; calcium-binding domain in the interval 1391–1430; that stretch reads DVNECDIPGFCSQHCVNMRGSFRCACDPEYTLESDGRTCK. N-linked (GlcNAc...) asparagine glycans are attached at residues N1451, N1497, and N1551. LDL-receptor class B repeat units lie at residues 1479 to 1521, 1522 to 1564, 1567 to 1610, 1611 to 1655, and 1656 to 1696; these read GRVF…DWIG, RNIY…DPRM, NVMF…DYPN, RLIY…FEDS, and VFWT…IHPS. N1676, N1733, and N1811 each carry an N-linked (GlcNAc...) asparagine glycan. LDL-receptor class B repeat units lie at residues 1791–1833, 1834–1883, 1884–1931, 1932–1973, 1974–2014, 2108–2157, 2158–2202, 2203–2246, 2247–2290, and 2291–2333; these read QFIY…DWVS, RNIY…DPAR, GKLY…DIQE, QKLY…HGSF, LYYS…YHHR, GFIY…DWVA, GNLY…DPKH, RYLF…DHDT, GYIY…FGES, and IIWV…FDEH. N-linked (GlcNAc...) asparagine glycosylation is found at N2131, N2134, N2178, and N2225. N2396 carries N-linked (GlcNAc...) asparagine glycosylation. 5 LDL-receptor class B repeats span residues 2432-2478, 2479-2519, 2520-2563, 2564-2605, and 2606-2647; these read NRIF…DWIN, RRIY…DPCR, GYMY…DLET, DLLY…YGQY, and IYWT…VVKT. N-linked (GlcNAc...) asparagine glycosylation is found at N2488 and N2548. 10 LDL-receptor class A domains span residues 2700–2738, 2741–2777, 2780–2819, 2822–2861, 2864–2902, 2907–2946, 2949–2991, 2994–3030, 3033–3071, and 3076–3112; these read RCNQ…TVCA, TCRS…AGCL, SCNS…KNCP, TCQP…IYCA, TCRS…DTCG, SCSA…HHCE, NCSS…QNCT, ACST…RGCS, PCRD…HLCH, and TCPP…KGCG. 18 disulfide bridges follow: C2701–C2713, C2708–C2726, C2720–C2737, C2742–C2754, C2749–C2767, C2761–C2776, C2781–C2794, C2789–C2807, C2801–C2818, C2823–C2836, C2830–C2849, C2843–C2860, C2865–C2878, C2872–C2891, C2885–C2901, C2908–C2920, C2915–C2933, and C2927–C2945. N-linked (GlcNAc...) asparagine glycosylation is present at N2782. N2810 carries N-linked (GlcNAc...) asparagine glycosylation. An N-linked (GlcNAc...) asparagine glycan is attached at N2949. 18 disulfides stabilise this stretch: C2950/C2967, C2957/C2980, C2974/C2990, C2995/C3007, C3002/C3020, C3014/C3029, C3034/C3046, C3041/C3059, C3053/C3070, C3077/C3089, C3084/C3102, C3096/C3111, C3116/C3128, C3124/C3137, C3139/C3152, C3158/C3169, C3165/C3178, and C3180/C3193. N-linked (GlcNAc...) asparagine glycosylation is present at N2989. Positions 3112 to 3153 constitute an EGF-like 3 domain; that stretch reads GINECQDSSISHCDHNCTDTITSFYCSCLPGYKLMSDKRTCV. N3127 carries an N-linked (GlcNAc...) asparagine glycan. In terms of domain architecture, EGF-like 4; calcium-binding spans 3154–3194; sequence DIDECKETPQLCSQKCENVIGSYICKCAPGYIREPDGKSCR. Residues N3213, N3259, N3317, and N3357 are each glycosylated (N-linked (GlcNAc...) asparagine). LDL-receptor class B repeat units follow at residues 3241–3283, 3284–3326, 3335–3378, 3379–3421, and 3422–3462; these read ERLY…DWVS, RKLY…ENPR, GYVY…DYTN, DLLY…FEDT, and VFWT…LHPY. Residue N3448 is glycosylated (N-linked (GlcNAc...) asparagine). 8 consecutive LDL-receptor class A domains span residues 3513-3551, 3554-3592, 3595-3633, 3636-3674, 3679-3717, 3720-3757, 3760-3796, and 3799-3835; these read MCSS…DLCP, FCRL…VLCE, RCEA…SHCA, TCRP…HECM, NCDN…QGCE, PCHP…ESCV, ECTE…RDCE, and TCHP…SACP. Disulfide bonds link C3514-C3527, C3521-C3540, C3534-C3550, C3555-C3567, C3562-C3580, C3574-C3591, C3596-C3608, C3603-C3621, C3615-C3632, C3637-C3649, C3644-C3662, C3656-C3673, C3680-C3694, C3688-C3707, C3701-C3716, C3721-C3734, C3729-C3747, C3741-C3756, C3761-C3773, C3768-C3786, C3780-C3795, C3800-C3812, C3807-C3825, and C3819-C3834. N3566 is a glycosylation site (N-linked (GlcNAc...) asparagine). N3682 is a glycosylation site (N-linked (GlcNAc...) asparagine). A glycan (N-linked (GlcNAc...) asparagine) is linked at N3840. 3 consecutive LDL-receptor class A domains span residues 3843-3881, 3884-3923, and 3929-3965; these read YCPA…HLCF, PCES…EHCR, and PCTD…TGCN. 9 disulfide bridges follow: C3844/C3856, C3851/C3869, C3863/C3880, C3885/C3898, C3893/C3911, C3905/C3922, C3930/C3942, C3937/C3955, and C3949/C3964. 2 N-linked (GlcNAc...) asparagine glycosylation sites follow: N3969 and N3980. The EGF-like 5; calcium-binding domain occupies 4009–4050; it reads DINECEEFGICPQSCRNSKGSYECFCVDGFKSMSTHYGERCA. Disulfide bonds link C4013–C4023, C4019–C4032, and C4034–C4049. N4070 is a glycosylation site (N-linked (GlcNAc...) asparagine). LDL-receptor class B repeat units follow at residues 4156-4198, 4199-4242, and 4244-4285; these read RHIY…NPKL, GLMF…DYLN, and DRIY…FEDQ. An N-linked (GlcNAc...) asparagine glycan is attached at N4329. The 35-residue stretch at 4379-4413 folds into the EGF-like 6 domain; the sequence is MPSPCRCMHGGSCYFDENDLPKCKCSSGYSGEYCE. 3 disulfides stabilise this stretch: C4383/C4391, C4385/C4401, and C4403/C4412. A helical membrane pass occupies residues 4426–4446; sequence MALLLTFAMVIIVGALVLVGF. At 4447–4660 the chain is on the cytoplasmic side; it reads FHYRKTGSLL…ANLVKEDSDV (214 aa). An SH3-binding motif is present at residues 4454 to 4463; it reads SLLPSLPKLP. Residues 4457 to 4462 carry the PxLPxI/L motif 1; mediates interaction with ANKRA2 motif; sequence PSLPKL. The PxLPxI/L motif 2; mediates interaction with ANKRA2 signature appears at 4460–4465; the sequence is PKLPSL. A phosphoserine mark is found at S4464 and S4467. Positions 4522–4527 match the Endocytosis signal motif; it reads FENPMY. The disordered stretch occupies residues 4558–4660; it reads QNYGRSIDPS…ANLVKEDSDV (103 aa). S4577 carries the phosphoserine modification. The tract at residues 4597–4610 is interaction with DAB2; that stretch reads QTTNFENPIYAEMD. The short motif at 4603-4606 is the NPXY motif element; that stretch reads NPIY. An SH2-binding motif is present at residues 4606–4609; it reads YAEM. The SH3-binding motif lies at 4619 to 4630; that stretch reads VAPPPSPSLPAK. Phosphoserine is present on S4624. Positions 4627 to 4636 are enriched in low complexity; the sequence is LPAKASKRSS. Position 4637 is a phosphothreonine (T4637). The residue at position 4658 (S4658) is a Phosphoserine.

The protein belongs to the LDLR family. Binds plasminogen, extracellular matrix components, plasminogen activator-plasminogen activator inhibitor type I complex, apolipoprotein E-enriched beta-VLDL, lipoprotein lipase, lactoferrin, CLU/clusterin and calcium. Forms a multimeric complex together with LRPAP1. Interacts (via PxLPxI/L motif) with ANKRA2 (via ankyrin repeats). Interacts with LRP2BP. Interacts (via NPXY motif) with DAB2; the interaction is not affected by tyrosine phosphorylation of the NPXY motif. Interacts with MB. Interacts with BMP4. Interacts with the Sonic hedgehog protein N-product which is the active product of SHH. Interacts with CST3 in a calcium-dependent manner. Interacts with the vitamin-D binding protein GC/DBP. Interacts with sex hormone-binding protein SHBG. Interacts with angiotensin-2. Also interacts with angiotensin 1-7. Interacts with APOM. Interacts with selenoprotein SEPP1. Interacts with LEP. Interacts with ALB. Interacts with the antiapoptotic protein BIRC5/survivin. Interacts with matrix metalloproteinase MMP2 in complex with metalloproteinase inhibitor TIMP1. In neurons, forms a trimeric complex with APP and APPB1/FE65. Interacts with LDLRAP1/ARH; mediates trafficking of LRP2 to the endocytic recycling compartment. Does not interact with beta-amyloid protein 40 alone but interacts with the complex composed of beta-amyloid protein 40 and CLU/APOJ. Interacts with MDK. In terms of processing, a fraction undergoes proteolytic cleavage of the extracellular domain at the cell membrane to generate a cytoplasmic tail fragment. This is internalized into the early endosome from where it trafficks in an LDLRAP1/ARH-dependent manner to the endocytic recycling compartment (ERC). In the ERC, it is further cleaved by gamma-secretase to release a fragment which translocates to the nucleus and mediates transcriptional repression. Post-translationally, N-glycosylation is required for ligand binding. Contains core-fucosylated N-glycans in kidney proximal convoluted tubules (PCTs) and hybrid-type N-glycans in proximal straight tubules (PSTs). Interacts with ligands in a glycoform-dependent manner. Retinol-binding protein and the vitamin D carrier GC/DBP are endocytosed primarily by PCTs, albumin is endocytosed equally by PCTs and PSTs, and the aminoglycoside kanamycin is endocytosed primarily by PSTs. As to expression, in the inner ear, strongly expressed in the marginal cells of the stria vascularis (at protein level). In the female reproductive tract, expressed on the luminal side of the uterine epithelium (at protein level). In the adult brain, expressed in ependymal cells of the lateral ventricles where expression is restricted to the ependyma that faces the stem cell niche (at protein level). Expressed in neurons throughout the brain including in the hippocampus, limbic cortices and cerebellum (at protein level). In the developing optic nerve, expressed exclusively in astrocytes at 14.5 dpc, 16.5 dpc and 18.5 dpc (at protein level).

Its subcellular location is the apical cell membrane. It localises to the endosome lumen. It is found in the membrane. The protein resides in the coated pit. The protein localises to the cell projection. Its subcellular location is the dendrite. It localises to the axon. In terms of biological role, multiligand endocytic receptor. Acts together with CUBN to mediate endocytosis of high-density lipoproteins. Mediates receptor-mediated uptake of polybasic drugs such as aprotinin, aminoglycosides and polymyxin B. In the kidney, mediates the tubular uptake and clearance of leptin. Also mediates transport of leptin across the blood-brain barrier through endocytosis at the choroid plexus epithelium. Endocytosis of leptin in neuronal cells is required for hypothalamic leptin signaling and leptin-mediated regulation of feeding and body weight. Mediates endocytosis and subsequent lysosomal degradation of CST3 in kidney proximal tubule cells. Mediates renal uptake of 25-hydroxyvitamin D3 in complex with the vitamin D3 transporter GC/DBP. Mediates renal uptake of metallothionein-bound heavy metals. Together with CUBN, mediates renal reabsorption of myoglobin. Mediates renal uptake and subsequent lysosomal degradation of APOM. Plays a role in kidney selenium homeostasis by mediating renal endocytosis of selenoprotein SEPP1. Mediates renal uptake of the antiapoptotic protein BIRC5/survivin which may be important for functional integrity of the kidney. Mediates renal uptake of matrix metalloproteinase MMP2 in complex with metalloproteinase inhibitor TIMP1. Mediates endocytosis of Sonic hedgehog protein N-product (ShhN), the active product of SHH. Also mediates ShhN transcytosis. In the embryonic neuroepithelium, mediates endocytic uptake and degradation of BMP4, is required for correct SHH localization in the ventral neural tube and plays a role in patterning of the ventral telencephalon. Required at the onset of neurulation to sequester SHH on the apical surface of neuroepithelial cells of the rostral diencephalon ventral midline and to control PTCH1-dependent uptake and intracellular trafficking of SHH. During neurulation, required in neuroepithelial cells for uptake of folate bound to the folate receptor FOLR1 which is necessary for neural tube closure. In the adult brain, negatively regulates BMP signaling in the subependymal zone which enables neurogenesis to proceed. In astrocytes, mediates endocytosis of ALB which is required for the synthesis of the neurotrophic factor oleic acid. Involved in neurite branching. During optic nerve development, required for SHH-mediated migration and proliferation of oligodendrocyte precursor cells. Mediates endocytic uptake and clearance of SHH in the retinal margin which protects retinal progenitor cells from mitogenic stimuli and keeps them quiescent. Plays a role in reproductive organ development by mediating uptake in reproductive tissues of androgen and estrogen bound to the sex hormone binding protein SHBG. Mediates endocytosis of angiotensin-2. Also mediates endocytosis of angiotensin 1-7. Binds to the complex composed of beta-amyloid protein 40 and CLU/APOJ and mediates its endocytosis and lysosomal degradation. Required for embryonic heart development. Required for normal hearing, possibly through interaction with estrogen in the inner ear. This is Low-density lipoprotein receptor-related protein 2 (Lrp2) from Mus musculus (Mouse).